The primary structure comprises 814 residues: Protein fam-161 (814 aa).

A compositionally biased stretch (polar residues) spans 71 to 87 (ITQHRSSYKVTKSSSCH). Disordered stretches follow at residues 71–130 (ITQH…SWSQ), 150–255 (RHQV…ATSA), 569–610 (SRSK…THAT), and 714–814 (MKSA…SSEA). Residues 99–111 (MPRHLDLKPRSSE) show a composition bias toward basic and acidic residues. Positions 174–193 (STAPSQVSVTSSVQSVAALS) are enriched in low complexity. Polar residues-rich tracts occupy residues 194 to 207 (GQNPRQQVHATPSH) and 216 to 235 (RTHQNSRQQVPSATSSTLQN). Residues 236–249 (PRHRTSSASRHHST) show a composition bias toward basic residues. Polar residues-rich tracts occupy residues 570-583 (RSKSATSRHGNCQE) and 594-610 (ENLPKTSKNRVPSTHAT). Residues 606-689 (STHATQLREE…LAEMKQRVLN (84 aa)) are a coiled coil. A compositionally biased stretch (basic and acidic residues) spans 714–727 (MKSAKGRGIERVQS). Positions 728–745 (QEKQQSIGRRSSEVSGSG) are enriched in polar residues. Basic and acidic residues predominate over residues 751–765 (KGYEESFESEDKSEK). Low complexity-rich tracts occupy residues 766–779 (SGSSTPSESGSGSE) and 795–814 (SKSTSSKSSSSRSTSSSSEA).

This sequence belongs to the FAM161 family. Expressed in amphid and phasmid ciliated neurons.

It is found in the cell projection. The protein localises to the cilium. Its subcellular location is the cytoplasm. The protein resides in the cytoskeleton. It localises to the cilium axoneme. This is Protein fam-161 from Caenorhabditis elegans.